Consider the following 513-residue polypeptide: Palmitoyltransferase ZDHHC14 (513 aa).

The Cytoplasmic segment spans residues 1–59 (MHLGVEEPIRECQYNQICTHNSSPMDTPHIKKKKNKRKWQVFPGRNRFYCNGRIMMAKQ). The chain crosses the membrane as a helical span at residues 60–80 (TGVFYLTMVLILVTSGLFFAF). Over 81-88 (DCPFLASN) the chain is Lumenal. Residues 89 to 109 (LTPAIPAIGGVLFVFVMGMLL) form a helical membrane-spanning segment. Topologically, residues 110-207 (RASFSDPGVL…GNCVGRRNYR (98 aa)) are cytoplasmic. The DHHC domain maps to 164–214 (KYCFTCKIFRPPRASHCSLCDNCVDRFDHHCPWVGNCVGRRNYRFFYLFIL). Cys-194 acts as the S-palmitoyl cysteine intermediate in catalysis. The chain crosses the membrane as a helical span at residues 208–228 (FFYLFILSLSFLTIFIFAFVI). The Lumenal segment spans residues 229-266 (THVILNALRKALALSTAADFEAVQKDPTGLAFLVLSKT). Residues 267-287 (ALLDILEVVVCFFSVWSIVGL) form a helical membrane-spanning segment. At 288–513 (SGFHTYLISS…VRGLVKLSSV (226 aa)) the chain is on the cytoplasmic side. The interval 348–369 (FIQPDTPQPATQTNGTSACPPN) is disordered. Residues 355–369 (QPATQTNGTSACPPN) show a composition bias toward polar residues.

This sequence belongs to the DHHC palmitoyltransferase family. ERF2/ZDHHC9 subfamily.

It localises to the endoplasmic reticulum membrane. The protein resides in the golgi apparatus membrane. It catalyses the reaction L-cysteinyl-[protein] + hexadecanoyl-CoA = S-hexadecanoyl-L-cysteinyl-[protein] + CoA. Its function is as follows. Palmitoyltransferase that could catalyze the addition of palmitate onto various protein substrates. This Danio rerio (Zebrafish) protein is Palmitoyltransferase ZDHHC14 (zdhhc14).